We begin with the raw amino-acid sequence, 28 residues long: uncharacterized protein (28 aa).

Over residues 1-18 (MLPRKYKPAYKKQAHRVK) the composition is skewed to basic residues. The interval 1–28 (MLPRKYKPAYKKQAHRVKSNPQPAYTFQ) is disordered. Residues 19–28 (SNPQPAYTFQ) are compositionally biased toward polar residues.

This is an uncharacterized protein from Saccharomyces cerevisiae (strain ATCC 204508 / S288c) (Baker's yeast).